The sequence spans 143 residues: Transthyretin-like protein 33 (143 aa).

A signal peptide spans 1–20 (MSRLACISSLFILCAIGSEA).

The protein belongs to the nematode transthyretin-like family. As to expression, expressed in head cells next to and anterior of the first pharyngeal bulb, the pharynx, and the hypodermis.

Its subcellular location is the secreted. In terms of biological role, protects dopaminergic neurons from degeneration caused by oxidative stress. The sequence is that of Transthyretin-like protein 33 from Caenorhabditis elegans.